Reading from the N-terminus, the 229-residue chain is Heptaprenylglyceryl phosphate synthase (229 aa).

K12 lines the sn-glycerol 1-phosphate pocket. Residues D14 and S40 each coordinate Mg(2+). Residues 159–164, G189, and 209–210 contribute to the sn-glycerol 1-phosphate site; these read YLEYSG and GN.

This sequence belongs to the GGGP/HepGP synthase family. Group I subfamily. In terms of assembly, homodimer. The cofactor is Mg(2+).

It carries out the reaction sn-glycerol 1-phosphate + all-trans-heptaprenyl diphosphate = 3-heptaprenyl-sn-glycero-1-phosphate + diphosphate. It functions in the pathway membrane lipid metabolism; glycerophospholipid metabolism. Its function is as follows. Prenyltransferase that catalyzes in vivo the transfer of the heptaprenyl moiety of heptaprenyl pyrophosphate (HepPP; 35 carbon atoms) to the C3 hydroxyl of sn-glycerol-1-phosphate (G1P), producing heptaprenylglyceryl phosphate (HepGP). This reaction is an ether-bond-formation step in the biosynthesis of archaea-type G1P-based membrane lipids found in Bacillales. This chain is Heptaprenylglyceryl phosphate synthase, found in Bacillus cereus (strain ATCC 14579 / DSM 31 / CCUG 7414 / JCM 2152 / NBRC 15305 / NCIMB 9373 / NCTC 2599 / NRRL B-3711).